Reading from the N-terminus, the 518-residue chain is MIPDVSQALAWLEKHPQALKGIQRGLERETLRVNADGTLATTGHPEALGSALTHKWITTDFAEALLEFITPVDGDIEHMLTFMRDLHRYTARNMGDERMWPLSMPCYIAEGQDIELAQYGTSNTGRFKTLYREGLKNRYGALMQTISGVHYNFSLPMAFWQAKCGDISGADAKEKISAGYFRVIRNYYRFGWVIPYLFGASPAICSSFLQGKPTSLPFEKTECGMYYLPYATSLRLSDLGYTNKSQSNLGITFNDLYEYVAGLKQAIKTPSEEYAKIGIEKDGKRLQINSNVLQIENELYAPIRPKRVTRSGESPSDALLRGGIEYIEVRSLDINPFSPIGVDEQQVRFLDLFMVWCALADAPEMSSSELACTRVNWNRVILEGRKPGLTLGIGCETAQFPLLQVGKDLFRDLKRVAQTLDSINGGDAYQKVCDELVACFDNPDLTFSARILRSMIDTGIGGTGKAFAEAYRNLLREEPLEILREEDFVAEREASERRQQEMETADTEPFAVWLEKHT.

Belongs to the glutamate--cysteine ligase type 1 family. Type 1 subfamily.

It catalyses the reaction L-cysteine + L-glutamate + ATP = gamma-L-glutamyl-L-cysteine + ADP + phosphate + H(+). The protein operates within sulfur metabolism; glutathione biosynthesis; glutathione from L-cysteine and L-glutamate: step 1/2. This is Glutamate--cysteine ligase from Shigella sonnei (strain Ss046).